A 151-amino-acid chain; its full sequence is Deoxyuridine 5'-triphosphate nucleotidohydrolase (151 aa).

Residues 70-72, Asn-83, 87-89, and Met-97 contribute to the substrate site; these read RSG and LID.

It belongs to the dUTPase family. The cofactor is Mg(2+).

The catalysed reaction is dUTP + H2O = dUMP + diphosphate + H(+). It functions in the pathway pyrimidine metabolism; dUMP biosynthesis; dUMP from dCTP (dUTP route): step 2/2. This enzyme is involved in nucleotide metabolism: it produces dUMP, the immediate precursor of thymidine nucleotides and it decreases the intracellular concentration of dUTP so that uracil cannot be incorporated into DNA. The protein is Deoxyuridine 5'-triphosphate nucleotidohydrolase of Mannheimia succiniciproducens (strain KCTC 0769BP / MBEL55E).